The sequence spans 273 residues: Undecaprenyl-diphosphatase (273 aa).

8 helical membrane passes run 3–23, 47–67, 90–110, 120–140, 148–168, 186–206, 217–237, and 249–269; these read IILWLQAVILGLVQGMTEFLP, ALDAMQFGSVIAVLGYFWQDI, LLLGITVGTIPALAAGLLLKL, IIATMAIAMAILLGLAEQWGS, IGILDGFLVGCGQMIALLPGA, PTAARFSFLLGIPTLTIATLV, LLIPLVIATLSSMVFSYLAIA, and WVFIWYRIGLGSALWGAIALG.

It belongs to the UppP family.

It is found in the cell inner membrane. It carries out the reaction di-trans,octa-cis-undecaprenyl diphosphate + H2O = di-trans,octa-cis-undecaprenyl phosphate + phosphate + H(+). Its function is as follows. Catalyzes the dephosphorylation of undecaprenyl diphosphate (UPP). Confers resistance to bacitracin. The sequence is that of Undecaprenyl-diphosphatase from Thermosynechococcus vestitus (strain NIES-2133 / IAM M-273 / BP-1).